A 487-amino-acid chain; its full sequence is Glutamate--tRNA ligase (487 aa).

Residues 11-21 (PSPTGYPHLGN) carry the 'HIGH' region motif. Cys108, Cys110, Cys135, and Asp137 together coordinate Zn(2+). The 'KMSKS' region motif lies at 245-249 (KLSKR). Lys248 contacts ATP.

It belongs to the class-I aminoacyl-tRNA synthetase family. Glutamate--tRNA ligase type 1 subfamily. As to quaternary structure, monomer. The cofactor is Zn(2+).

The protein resides in the cytoplasm. It carries out the reaction tRNA(Glu) + L-glutamate + ATP = L-glutamyl-tRNA(Glu) + AMP + diphosphate. Functionally, catalyzes the attachment of glutamate to tRNA(Glu) in a two-step reaction: glutamate is first activated by ATP to form Glu-AMP and then transferred to the acceptor end of tRNA(Glu). In Dehalococcoides mccartyi (strain ATCC BAA-2100 / JCM 16839 / KCTC 5957 / BAV1), this protein is Glutamate--tRNA ligase.